The sequence spans 448 residues: Tubulin alpha chain, nucleomorph (448 aa).

Q11, E71, S140, G144, T145, T179, N206, and N228 together coordinate GTP. E71 is a binding site for Mg(2+). E254 is an active-site residue.

The protein belongs to the tubulin family. As to quaternary structure, dimer of alpha and beta chains. A typical microtubule is a hollow water-filled tube with an outer diameter of 25 nm and an inner diameter of 15 nM. Alpha-beta heterodimers associate head-to-tail to form protofilaments running lengthwise along the microtubule wall with the beta-tubulin subunit facing the microtubule plus end conferring a structural polarity. Microtubules usually have 13 protofilaments but different protofilament numbers can be found in some organisms and specialized cells. Requires Mg(2+) as cofactor.

It carries out the reaction GTP + H2O = GDP + phosphate + H(+). Its function is as follows. Tubulin is the major constituent of microtubules, a cylinder consisting of laterally associated linear protofilaments composed of alpha- and beta-tubulin heterodimers. Microtubules grow by the addition of GTP-tubulin dimers to the microtubule end, where a stabilizing cap forms. Below the cap, tubulin dimers are in GDP-bound state, owing to GTPase activity of alpha-tubulin. The protein is Tubulin alpha chain, nucleomorph (tubA) of Guillardia theta (Cryptophyte).